We begin with the raw amino-acid sequence, 346 residues long: UDP-3-O-acylglucosamine N-acyltransferase (346 aa).

Residue His-253 is the Proton acceptor of the active site.

The protein belongs to the transferase hexapeptide repeat family. LpxD subfamily. In terms of assembly, homotrimer.

The enzyme catalyses a UDP-3-O-[(3R)-3-hydroxyacyl]-alpha-D-glucosamine + a (3R)-hydroxyacyl-[ACP] = a UDP-2-N,3-O-bis[(3R)-3-hydroxyacyl]-alpha-D-glucosamine + holo-[ACP] + H(+). Its pathway is bacterial outer membrane biogenesis; LPS lipid A biosynthesis. Its function is as follows. Catalyzes the N-acylation of UDP-3-O-acylglucosamine using 3-hydroxyacyl-ACP as the acyl donor. Is involved in the biosynthesis of lipid A, a phosphorylated glycolipid that anchors the lipopolysaccharide to the outer membrane of the cell. The protein is UDP-3-O-acylglucosamine N-acyltransferase of Rickettsia akari (strain Hartford).